The following is a 636-amino-acid chain: NADP-dependent malic enzyme, chloroplastic (636 aa).

The segment at methionine 1 to glycine 28 is disordered. Residues methionine 1–alanine 62 constitute a chloroplast transit peptide. Residues alanine 7–proline 18 are compositionally biased toward low complexity. The active-site Proton donor is the tyrosine 184. An NAD(+)-binding site is contributed by arginine 237. Lysine 255 functions as the Proton acceptor in the catalytic mechanism. Glutamate 327, aspartate 328, and aspartate 351 together coordinate a divalent metal cation. Aspartate 351 serves as a coordination point for NAD(+). Position 380-396 (leucine 380–alanine 396) interacts with NADP(+). Position 492 (asparagine 492) interacts with NAD(+).

This sequence belongs to the malic enzymes family. In terms of assembly, homotetramer. Mg(2+) serves as cofactor. It depends on Mn(2+) as a cofactor.

It localises to the plastid. The protein resides in the chloroplast. The catalysed reaction is (S)-malate + NADP(+) = pyruvate + CO2 + NADPH. It carries out the reaction oxaloacetate + H(+) = pyruvate + CO2. It participates in photosynthesis; C4 acid pathway. The chloroplastic ME isoform decarboxylates malate shuttled from neighboring mesophyll cells. The CO(2) released is then refixed by ribulose-bisphosphate carboxylase. This pathway eliminates the photorespiratory loss of CO(2) that occurs in most plants. The sequence is that of NADP-dependent malic enzyme, chloroplastic (MOD1) from Zea mays (Maize).